Here is an 873-residue protein sequence, read N- to C-terminus: Bifunctional levopimaradiene synthase, chloroplastic (873 aa).

The N-terminal 59 residues, 1–59 (MAGVLFANLPCSLQLSPKVPFRQSTNILIPFHKRSSFGFNAQHCVRSHLRLRWNCVGIH), are a transit peptide targeting the chloroplast. Residue K271 coordinates substrate. Mg(2+) contacts are provided by D405 and D407. Residues 405–408 (DVDD) carry the DXDD motif motif. A substrate-binding site is contributed by K492. The Mg(2+) site is built by D624, D628, N769, T773, and E777. The short motif at 624–628 (DDLYD) is the DDXXD motif element.

This sequence belongs to the terpene synthase family. Tpsd subfamily. The cofactor is Mg(2+). As to expression, expressed in roots.

It is found in the plastid. The protein resides in the chloroplast. The enzyme catalyses (2E,6E,10E)-geranylgeranyl diphosphate = (+)-copalyl diphosphate. It catalyses the reaction (+)-copalyl diphosphate = abieta-8(14),12-diene + diphosphate. Its pathway is terpene metabolism; ginkgolide biosynthesis. Functionally, catalyzes the initial cyclization step in the biosynthesis of ginkgolides, a structurally unique family of diterpenoids that are highly specific platelet-activating-factor receptor antagonists. Bifunctional enzyme that catalyzes two sequential cyclizations of geranylgeranyl diphosphate (GGPP) to levopimaradiene. The polypeptide is Bifunctional levopimaradiene synthase, chloroplastic (LPS) (Ginkgo biloba (Ginkgo)).